The following is a 100-amino-acid chain: UPF0251 protein VV2_0946 (100 aa).

This sequence belongs to the UPF0251 family.

The polypeptide is UPF0251 protein VV2_0946 (Vibrio vulnificus (strain CMCP6)).